The following is a 1885-amino-acid chain: Fatty acid synthase subunit alpha (1885 aa).

Positions 92–107 (PDPADLAPKETPKQEE) are enriched in basic and acidic residues. Residues 92-140 (PDPADLAPKETPKQEESTPSAPAAATPTPAAAAAPTPAPAPASAGPVES) form a disordered region. Over residues 108-126 (STPSAPAAATPTPAAAAAP) the composition is skewed to low complexity. The 76-residue stretch at 146 to 221 (VKANLLIHVL…EQFQDSFSGQ (76 aa)) folds into the Carrier domain. Position 181 is an O-(pantetheine 4'-phosphoryl)serine (Ser-181). A Ketosynthase family 3 (KS3) domain is found at 1121-1661 (IQEIVVQHDL…QKGAQAVVVH (541 aa)). Catalysis depends on for beta-ketoacyl synthase activity residues Cys-1304, His-1546, and His-1587. Mg(2+) is bound by residues Asp-1771, Val-1772, and Glu-1773. Acetyl-CoA contacts are provided by residues 1771–1773 (DVE), Tyr-1797, Ser-1807, 1816–1826 (EAVFKALGVES), 1840–1843 (RDVN), and 1870–1872 (ISH). Positions 1871 and 1872 each coordinate Mg(2+).

It belongs to the thiolase-like superfamily. Fungal fatty acid synthetase subunit alpha family. In terms of assembly, [Alpha(6)beta(6)] hexamers of two multifunctional subunits (alpha and beta).

The enzyme catalyses acetyl-CoA + n malonyl-CoA + 2n NADPH + 4n H(+) = a long-chain-acyl-CoA + n CoA + n CO2 + 2n NADP(+).. It carries out the reaction a fatty acyl-[ACP] + malonyl-[ACP] + H(+) = a 3-oxoacyl-[ACP] + holo-[ACP] + CO2. It catalyses the reaction a (3R)-hydroxyacyl-[ACP] + NADP(+) = a 3-oxoacyl-[ACP] + NADPH + H(+). Functionally, fatty acid synthetase catalyzes the formation of long-chain fatty acids from acetyl-CoA, malonyl-CoA and NADPH. The alpha subunit contains domains for: acyl carrier protein, 3-oxoacyl-[acyl-carrier-protein] reductase, and 3-oxoacyl-[acyl-carrier-protein] synthase. The chain is Fatty acid synthase subunit alpha (FAS2) from Candida albicans (Yeast).